The sequence spans 156 residues: MPRRREVEKRKILPDPKFQDRIVAKFVNNLMRKGKKSTGERIIYGAFDQVEAKLKDDPLKVFKKALDNVKPVVEVKSRRVGGATYQVPVEVRQDRRTALAMRWLIEYSRGRGEKTMVEKLAGEIMDAASNRGNAVKKREDTHKMAEANKAFAHYRW.

This sequence belongs to the universal ribosomal protein uS7 family. As to quaternary structure, part of the 30S ribosomal subunit. Contacts proteins S9 and S11.

In terms of biological role, one of the primary rRNA binding proteins, it binds directly to 16S rRNA where it nucleates assembly of the head domain of the 30S subunit. Is located at the subunit interface close to the decoding center, probably blocks exit of the E-site tRNA. This chain is Small ribosomal subunit protein uS7, found in Anaeromyxobacter dehalogenans (strain 2CP-1 / ATCC BAA-258).